A 376-amino-acid chain; its full sequence is MAAAAGVAAGTGRGSGEGEELLPNAVEGDGGCGGGGTCAGDRPWRLNFDGLRRPEAHQEKPPRRFHDRLGGLVQSPGDDVAEYYQQQSELLEGFNEMDTLTDRGFLPGMSKEECEKVARSEALAIRLSNIANMVLFAAKVYASIRSGSLAIIASTLDSLLDLLSGFILWFTAFSKKTSNPYRYPIGKRRMQPLGILVFASVMATLGLQIILESTRSLFYDGDTFRLTKEQEKWVVDIMLSVTSVKLLLVVYCRSFTNEILAIYTIRTWSMTVLENVHSLVGQSASPEYLQKLTYLCWNHHKAVRHIDTVRAYTFGSHYFVEVDIVLPCDMPLQEAHDIGEAPQEKLESLPEIERAFVHLDYEFTHQPEHARSHDTL.

Residues 1–28 are disordered; that stretch reads MAAAAGVAAGTGRGSGEGEELLPNAVEG. At 1–123 the chain is on the cytoplasmic side; the sequence is MAAAAGVAAG…CEKVARSEAL (123 aa). The helical transmembrane segment at 124 to 144 threads the bilayer; sequence AIRLSNIANMVLFAAKVYASI. The Vacuolar portion of the chain corresponds to 145–149; it reads RSGSL. The helical transmembrane segment at 150-170 threads the bilayer; that stretch reads AIIASTLDSLLDLLSGFILWF. Residues 171-191 lie on the Cytoplasmic side of the membrane; sequence TAFSKKTSNPYRYPIGKRRMQ. Residues 192–212 traverse the membrane as a helical segment; it reads PLGILVFASVMATLGLQIILE. The Vacuolar segment spans residues 213 to 231; it reads STRSLFYDGDTFRLTKEQE. A helical transmembrane segment spans residues 232-252; it reads KWVVDIMLSVTSVKLLLVVYC. Residues 253 to 376 are Cytoplasmic-facing; the sequence is RSFTNEILAI…PEHARSHDTL (124 aa).

Belongs to the cation diffusion facilitator (CDF) transporter (TC 2.A.4) family. SLC30A subfamily.

The protein resides in the vacuole membrane. Functionally, involved in sequestration of excess metal in the cytoplasm into vacuoles to maintain metal homeostasis. The protein is Metal tolerance protein 6 (MTP6) of Oryza sativa subsp. japonica (Rice).